A 215-amino-acid chain; its full sequence is Mite allergen Der p 7 (215 aa).

The N-terminal stretch at 1–17 is a signal peptide; the sequence is MMKLLLIAAAAFVAVSA. N151 is a glycosylation site (N-linked (GlcNAc...) asparagine).

Belongs to the mite group 7 allergen family.

The protein resides in the secreted. The protein is Mite allergen Der p 7 (DERP7) of Dermatophagoides pteronyssinus (European house dust mite).